We begin with the raw amino-acid sequence, 243 residues long: MQGRAGAGEAAGAGSEADAPVSLLPLFAWLTPSFPVGAYAYSHTLEWAVEAGDIRDEESLGTFLGDLLALGFGRSDAILAAHAHRAAAVGDKTALAEVNALAVALAPSAELRLETCQQGRSFLDAVRAAWPAPGLDAAAAALVGEVAYPVAVGLAAGVHGLPLAPTLEAFLLATVQNLVSAAVRLAPIGQTAGTRVVARLAPGVRALALEIPTLTLDDLGSATFRADLGSFRHETQYTRLFRS.

It belongs to the UreF family. As to quaternary structure, ureD, UreF and UreG form a complex that acts as a GTP-hydrolysis-dependent molecular chaperone, activating the urease apoprotein by helping to assemble the nickel containing metallocenter of UreC. The UreE protein probably delivers the nickel.

The protein localises to the cytoplasm. Its function is as follows. Required for maturation of urease via the functional incorporation of the urease nickel metallocenter. The chain is Urease accessory protein UreF from Xanthobacter autotrophicus (strain ATCC BAA-1158 / Py2).